Here is a 180-residue protein sequence, read N- to C-terminus: Ribulose bisphosphate carboxylase small subunit, chloroplastic (180 aa).

A chloroplast-targeting transit peptide spans methionine 1–arginine 56.

Belongs to the RuBisCO small chain family. Heterohexadecamer of 8 large and 8 small subunits.

It is found in the plastid. The protein localises to the chloroplast. Functionally, ruBisCO catalyzes two reactions: the carboxylation of D-ribulose 1,5-bisphosphate, the primary event in carbon dioxide fixation, as well as the oxidative fragmentation of the pentose substrate. Both reactions occur simultaneously and in competition at the same active site. Although the small subunit is not catalytic it is essential for maximal activity. The sequence is that of Ribulose bisphosphate carboxylase small subunit, chloroplastic from Stellaria longipes (Longstalk starwort).